A 130-amino-acid chain; its full sequence is Small ribosomal subunit protein uS9 (130 aa).

It belongs to the universal ribosomal protein uS9 family.

This is Small ribosomal subunit protein uS9 from Shewanella amazonensis (strain ATCC BAA-1098 / SB2B).